Reading from the N-terminus, the 100-residue chain is Integration host factor subunit alpha (100 aa).

The tract at residues 53–72 (FQLRDKPQRPGRNPKTGEEV) is disordered.

The protein belongs to the bacterial histone-like protein family. As to quaternary structure, heterodimer of an alpha and a beta chain.

Functionally, this protein is one of the two subunits of integration host factor, a specific DNA-binding protein that functions in genetic recombination as well as in transcriptional and translational control. The sequence is that of Integration host factor subunit alpha from Neisseria gonorrhoeae (strain ATCC 700825 / FA 1090).